The sequence spans 555 residues: Glucose-6-phosphate isomerase (555 aa).

Residues 169–170, 219–224, glutamine 364, glutamate 368, histidine 399, and lysine 521 contribute to the D-glucose 6-phosphate site; these read GS and SKTFTT. Residue glutamate 368 is the Proton donor of the active site. Catalysis depends on residues histidine 399 and lysine 521.

The protein belongs to the GPI family. In terms of assembly, homodimer.

It localises to the cytoplasm. Its subcellular location is the cytosol. It carries out the reaction alpha-D-glucose 6-phosphate = beta-D-fructose 6-phosphate. It participates in carbohydrate degradation; glycolysis; D-glyceraldehyde 3-phosphate and glycerone phosphate from D-glucose: step 2/4. Its function is as follows. In the cytoplasm, catalyzes the conversion of glucose-6-phosphate to fructose-6-phosphate, the second step in glycolysis, and the reverse reaction during gluconeogenesis. The polypeptide is Glucose-6-phosphate isomerase (PGI1) (Eremothecium gossypii (strain ATCC 10895 / CBS 109.51 / FGSC 9923 / NRRL Y-1056) (Yeast)).